A 176-amino-acid chain; its full sequence is uncharacterized protein (176 aa).

The span at 15–28 (TSSNPPASASQSTG) shows a compositional bias: polar residues. 2 disordered regions span residues 15-100 (TSSN…TSAG) and 125-176 (ASLR…NLGA). Basic and acidic residues predominate over residues 43 to 52 (FIDKVTDKPS).

This is an uncharacterized protein from Homo sapiens (Human).